Consider the following 250-residue polypeptide: Probable transcriptional regulatory protein RHA1_ro06891 (250 aa).

Belongs to the TACO1 family.

The protein resides in the cytoplasm. This Rhodococcus jostii (strain RHA1) protein is Probable transcriptional regulatory protein RHA1_ro06891.